The chain runs to 205 residues: Large ribosomal subunit protein uL18 (205 aa).

It belongs to the universal ribosomal protein uL18 family. As to quaternary structure, part of the 50S ribosomal subunit. Contacts the 5S and 23S rRNAs.

In terms of biological role, this is one of the proteins that bind and probably mediate the attachment of the 5S RNA into the large ribosomal subunit, where it forms part of the central protuberance. The sequence is that of Large ribosomal subunit protein uL18 from Pyrobaculum neutrophilum (strain DSM 2338 / JCM 9278 / NBRC 100436 / V24Sta) (Thermoproteus neutrophilus).